Reading from the N-terminus, the 166-residue chain is 3-hydroxyacyl-[acyl-carrier-protein] dehydratase FabZ (166 aa).

Residue His-72 is part of the active site.

Belongs to the thioester dehydratase family. FabZ subfamily.

Its subcellular location is the cytoplasm. It carries out the reaction a (3R)-hydroxyacyl-[ACP] = a (2E)-enoyl-[ACP] + H2O. In terms of biological role, involved in unsaturated fatty acids biosynthesis. Catalyzes the dehydration of short chain beta-hydroxyacyl-ACPs and long chain saturated and unsaturated beta-hydroxyacyl-ACPs. The protein is 3-hydroxyacyl-[acyl-carrier-protein] dehydratase FabZ of Synechococcus sp. (strain JA-3-3Ab) (Cyanobacteria bacterium Yellowstone A-Prime).